We begin with the raw amino-acid sequence, 110 residues long: Hydrogenase maturation factor HypA (110 aa).

Residue histidine 2 coordinates Ni(2+). 4 residues coordinate Zn(2+): cysteine 70, cysteine 73, cysteine 86, and cysteine 89.

It belongs to the HypA/HybF family.

Involved in the maturation of [NiFe] hydrogenases. Required for nickel insertion into the metal center of the hydrogenase. In Geotalea daltonii (strain DSM 22248 / JCM 15807 / FRC-32) (Geobacter daltonii), this protein is Hydrogenase maturation factor HypA.